The sequence spans 411 residues: Multifunctional CCA protein (411 aa).

ATP is bound by residues Gly8 and Arg11. Residues Gly8 and Arg11 each coordinate CTP. Mg(2+)-binding residues include Asp21 and Asp23. ATP-binding residues include Arg91, Arg137, and Arg140. Residues Arg91, Arg137, and Arg140 each coordinate CTP. The HD domain occupies 228 to 329; it reads CGIHTLMVAK…VNILDQIDSW (102 aa).

Belongs to the tRNA nucleotidyltransferase/poly(A) polymerase family. Bacterial CCA-adding enzyme type 1 subfamily. In terms of assembly, monomer. Can also form homodimers and oligomers. Mg(2+) is required as a cofactor. Requires Ni(2+) as cofactor.

It catalyses the reaction a tRNA precursor + 2 CTP + ATP = a tRNA with a 3' CCA end + 3 diphosphate. The enzyme catalyses a tRNA with a 3' CCA end + 2 CTP + ATP = a tRNA with a 3' CCACCA end + 3 diphosphate. Catalyzes the addition and repair of the essential 3'-terminal CCA sequence in tRNAs without using a nucleic acid template. Adds these three nucleotides in the order of C, C, and A to the tRNA nucleotide-73, using CTP and ATP as substrates and producing inorganic pyrophosphate. tRNA 3'-terminal CCA addition is required both for tRNA processing and repair. Also involved in tRNA surveillance by mediating tandem CCA addition to generate a CCACCA at the 3' terminus of unstable tRNAs. While stable tRNAs receive only 3'-terminal CCA, unstable tRNAs are marked with CCACCA and rapidly degraded. The sequence is that of Multifunctional CCA protein from Photobacterium profundum (strain SS9).